The primary structure comprises 448 residues: Portal protein (448 aa).

The tract at residues 1 to 25 (MAKRGRKPKELVPGPGSIDPSDVPK) is disordered.

This sequence belongs to the P23virus portal protein family. Homododecamer. Interacts with the capsid protein. Interacts with the terminase large subunit; this interaction allows the packaging of viral DNA.

The protein localises to the virion. Functionally, forms the portal vertex of the capsid. This portal plays critical roles in head assembly, genome packaging, neck/tail attachment, and genome ejection. The portal protein multimerizes as a single ring-shaped homododecamer arranged around a central channel. Forms the portal vertex of the capsid. This portal plays critical roles in head assembly, genome packaging, neck/tail attachment, and genome ejection. The polypeptide is Portal protein (Thermus thermophilus (Thermus thermophilus phage G20c)).